We begin with the raw amino-acid sequence, 1119 residues long: MVPRRSRQRPASSCRTAKTARREMPYPLPAPDGQEPEAQPVTPSPVFPEIEEDVLAFWDRDGTFHASIDNRDGAPEWVFYDGPPFANGLPHYGHLMTGYAKDVFPRYQTMRGKKVERRFGWDTHGLPAELEAERQLGITDKSQIEEMGLAAFNQAAKDSVLKYTREWQQYVTRQARWVDFDNGYKTLDTTYMESVIWAFKQLHEKGLAYEGYRVLPYCWRDQTPLSNHELRMDDDVYKMRQDQTVTVTFPLTGAKAESLGLTGVRVLAWTTTPWTLPTNLALVVGPDIQYAVVPAGPNGAADAHGRPDDEVLSGEYLLAIDLVGNYAKDLGYGSPEAARAAVTRTIPGRELEGVTYDRLWDYYADAATWGTQNAWQILVDGYVTTEDGTGIVHQAPAYGEDDQRVCEAAGIPVIISVDDGARFLPAVQDVAGLQVFEAGKPLIKLLREEGRLLRQASYEHSYPHCWRCRNPLIYKAVSSWFVRVTDFRDRMVALNQEITWVPENVKDGQFGKWLAGARDWSISRNRYFGSPIPVWKSDDPDYPRVDVYGSLAELERDFGRLPLNAAGEPDLHRPFVDDLTRPNPDDPTGRSTMRRIPDVLDVWFDSGSMPFAQVHYPFENSDWFDSHNPADFIVEYIGQARGWFYLLHALSTALFDRPAFTNVISHGIVLGNDGQKVSKSLRNYPDVNDVFDRDGSDAMRWFLMSSPVLRGGNLVVTEEGVREGVRQVLLPLWNTWYFFSLYANATGYEAKRSTASAAVLDRYLLAKTRDLVEAVTADLDALDSTLASAKLRDFADLLTNWYVRRSRDRFWAGVDGEGAGAEAFDTLYTVLETLTRVAAPLLPLVTERIWKDLTGGRSVHLTDWPDAAELPADDALVAAMDRVRAISSTALSLRKQAGLRVRLPLASLTVVAEGAAALAPFEAILRDELNVKAVCLVEGEHSGVDRALTVKARQLGPRIGKRVQEVIRAAKSGDWSEADGVVTAGGVELEPGEYELAVVISAPTARFENGVYIELDTALTPELEAEGLARDIIRAVQDTRKAAGLGVSDRIALTLAFENGGDARVLGLATEVDIASETLARTVQVAAAAGAFVKTFGAGQFANVGDFTVGITKIEEADE.

The disordered stretch occupies residues 1–43; sequence MVPRRSRQRPASSCRTAKTARREMPYPLPAPDGQEPEAQPVTP. Positions 84–94 match the 'HIGH' region motif; sequence PFANGLPHYGH. A 'KMSKS' region motif is present at residues 676–680; the sequence is KVSKS. K679 contacts ATP.

This sequence belongs to the class-I aminoacyl-tRNA synthetase family. IleS type 2 subfamily. As to quaternary structure, monomer. Requires Zn(2+) as cofactor.

It is found in the cytoplasm. It carries out the reaction tRNA(Ile) + L-isoleucine + ATP = L-isoleucyl-tRNA(Ile) + AMP + diphosphate. Its function is as follows. Catalyzes the attachment of isoleucine to tRNA(Ile). As IleRS can inadvertently accommodate and process structurally similar amino acids such as valine, to avoid such errors it has two additional distinct tRNA(Ile)-dependent editing activities. One activity is designated as 'pretransfer' editing and involves the hydrolysis of activated Val-AMP. The other activity is designated 'posttransfer' editing and involves deacylation of mischarged Val-tRNA(Ile). This chain is Isoleucine--tRNA ligase, found in Leifsonia xyli subsp. xyli (strain CTCB07).